The following is a 716-amino-acid chain: MASNSLLRSSSNFFLGSHIIISSPTPKTTRKPSFPFSFVSRAKYQITRSSQDENSPNGKPNSPFSSQVALAAILLSSISSSPLALAVVDEPASPSVVIESQAVKPSTPSPLFIQNEILKAPSPKSSDLPEGSQWRYSEFLNAVKKGKVERVRFSKDGSVVQLTAVDNRRASVIVPNDPDLIDILAMNGVDISVSEGESSGNDLFTVIGNLIFPLLAFGGLFLLFRRAQGGPGGGPGGLGGPMDFGRSKSKFQEVPETGVSFADVAGADQAKLELQEVVDFLKNPDKYTALGAKIPKGCLLVGPPGTGKTLLARAVAGEAGVPFFSCAASEFVELFVGVGASRVRDLFEKAKSKAPCIVFIDEIDAVGRQRGAGMGGGNDEREQTINQLLTEMDGFSGNSGVIVLAATNRPDVLDSALLRPGRFDRQVTVDRPDVAGRVKILQVHSRGKALGKDVDFDKVARRTPGFTGADLQNLMNEAAILAARRELKEISKDEISDALERIIAGPEKKNAVVSEEKKRLVAYHEAGHALVGALMPEYDPVAKISIIPRGQAGGLTFFAPSEERLESGLYSRSYLENQMAVALGGRVAEEVIFGDENVTTGASNDFMQVSRVARQMIERFGFSKKIGQVAVGGPGGNPFMGQQMSSQKDYSMATADIVDAEVRELVEKAYKRATEIITTHIDILHKLAQLLIEKETVDGEEFMSLFIDGQAELYIS.

The transit peptide at 1 to 48 directs the protein to the chloroplast; it reads MASNSLLRSSSNFFLGSHIIISSPTPKTTRKPSFPFSFVSRAKYQITR. A thylakoid-targeting transit peptide spans 49–86; that stretch reads SSQDENSPNGKPNSPFSSQVALAAILLSSISSSPLALA. Residues 204 to 224 traverse the membrane as a helical segment; that stretch reads FTVIGNLIFPLLAFGGLFLLF. 302-309 contributes to the ATP binding site; the sequence is GPPGTGKT. His-524 lines the Zn(2+) pocket. The active site involves Glu-525. Zn(2+)-binding residues include His-528 and Asp-605.

This sequence in the N-terminal section; belongs to the AAA ATPase family. It in the C-terminal section; belongs to the peptidase M41 family. As to quaternary structure, interacts with CHIP and HSP70. Heterohexamers with FTSH2, FTSH5 and FTSH8. Zn(2+) is required as a cofactor. In terms of processing, the FTSH1 precursor is ubiquitinated by CHIP in the cytoplasm. As to expression, ubiquitous.

The protein localises to the plastid. It localises to the chloroplast thylakoid membrane. Part of a complex that function as an ATP-dependent zinc metallopeptidase. Involved in the thylakoid formation and in the removal of damaged D1 in the photosystem II, preventing cell death under high-intensity light conditions. The sequence is that of ATP-dependent zinc metalloprotease FTSH 1, chloroplastic (FTSH1) from Arabidopsis thaliana (Mouse-ear cress).